The chain runs to 213 residues: Glutathione S-transferase APIC (213 aa).

The 82-residue stretch at 1–82 (MAIKVHGSPM…YIAHVYADNG (82 aa)) folds into the GST N-terminal domain. Residues serine 11, 12–13 (TA), 40–41 (HK), 53–54 (QV), and 66–67 (ES) each bind glutathione. The GST C-terminal domain maps to 89–213 (DPKKMPIMSV…WVKGLEKLQK (125 aa)).

The protein belongs to the GST superfamily. Phi family.

It catalyses the reaction RX + glutathione = an S-substituted glutathione + a halide anion + H(+). Its function is as follows. Conjugation of reduced glutathione to a wide number of exogenous and endogenous hydrophobic electrophiles. This is Glutathione S-transferase APIC from Nicotiana tabacum (Common tobacco).